A 146-amino-acid polypeptide reads, in one-letter code: Large ribosomal subunit protein uL15 (146 aa).

The segment covering 1–13 has biased composition (basic and acidic residues); it reads MKLNELKPNEGSR. Positions 1–54 are disordered; that stretch reads MKLNELKPNEGSRRNRKRVGRGTSSGYGKTAGRGQKGQLARTGGKTRLGFEGGQ. The segment covering 23 to 35 has biased composition (gly residues); the sequence is TSSGYGKTAGRGQ.

Belongs to the universal ribosomal protein uL15 family. As to quaternary structure, part of the 50S ribosomal subunit.

Binds to the 23S rRNA. This chain is Large ribosomal subunit protein uL15, found in Lactobacillus johnsonii (strain CNCM I-12250 / La1 / NCC 533).